Consider the following 273-residue polypeptide: SUMO-1 cysteine protease S273R (273 aa).

Catalysis depends on residues histidine 168 and asparagine 187. Glutamine 226 is a binding site for substrate. Catalysis depends on cysteine 232, which acts as the Nucleophile.

Belongs to the peptidase C63 family.

It localises to the host cytoplasm. It is found in the virion. In terms of biological role, cysteine protease that plays several role during infection including processing of the structural polyprotein or inhibition of the host immune response. Catalyzes the maturation of the pp220 and pp62 polyprotein precursors into core-shell proteins. Plays a role in the disruption of host pyroptosis via specific cleavage of gasdermin D/GSDMD. In addition, strongly decreases the host cGAS-STING signaling by targeting IKBKE via its enzymatic activity. Also impairs host FOXJ1-mediated antiviral effect via degradation of FOXJ1. This is SUMO-1 cysteine protease S273R from Ornithodoros (relapsing fever ticks).